A 276-amino-acid polypeptide reads, in one-letter code: Hemin import ATP-binding protein HmuV (276 aa).

The 258-residue stretch at 2-259 (LTAHHLDVAR…AHIAQCYGFA (258 aa)) folds into the ABC transporter domain. Residue 34 to 41 (GRNGAGKS) coordinates ATP.

This sequence belongs to the ABC transporter superfamily. Heme (hemin) importer (TC 3.A.1.14.5) family. The complex is composed of two ATP-binding proteins (HmuV), two transmembrane proteins (HmuU) and a solute-binding protein (HmuT).

It localises to the cell inner membrane. In terms of biological role, part of the ABC transporter complex HmuTUV involved in hemin import. Responsible for energy coupling to the transport system. The polypeptide is Hemin import ATP-binding protein HmuV (Burkholderia cenocepacia (strain HI2424)).